The primary structure comprises 147 residues: uncharacterized protein (147 aa).

In terms of domain architecture, Response regulatory spans 1-59 (MGAELVKWVKSHKIDAHIITFVAKMPYIDSIKLLEAGAKGCVWKTSHPAKLNRAIDSIS). One can recognise an HTH luxR-type domain in the interval 78–143 (RYSSDNQLTN…ELIKTALRMG (66 aa)). A DNA-binding region (H-T-H motif) is located at residues 102–121 (NKEIANFLQLSRKTVETHRL).

Post-translationally, overexpressed protein is phosphorylated in vitro by non-cognate histidine kinases BarA and UhpB.

This is an uncharacterized protein from Escherichia coli (strain K12).